Consider the following 151-residue polypeptide: MVIVMKVAITSGAAEGPTKLNAFDNALLQAGIGDVNLIKVSSILPRNTRIVELPELEPGSIVNCVLSHMVSERRGDLISAAVAVATSSDFGCVVENSSVNRDPEDVRSEAISMVRYMMSVRGLEIKELIVEETNHVVEKCGAAVSAVVYLD.

Ser-42 bears the Pyruvic acid (Ser) mark.

The protein belongs to the PdaD family. The cofactor is pyruvate.

The enzyme catalyses L-arginine + H(+) = agmatine + CO2. The polypeptide is Pyruvoyl-dependent arginine decarboxylase (Methanothermobacter thermautotrophicus (strain ATCC 29096 / DSM 1053 / JCM 10044 / NBRC 100330 / Delta H) (Methanobacterium thermoautotrophicum)).